A 126-amino-acid chain; its full sequence is Large ribosomal subunit protein bL17 (126 aa).

Belongs to the bacterial ribosomal protein bL17 family. In terms of assembly, part of the 50S ribosomal subunit. Contacts protein L32.

The sequence is that of Large ribosomal subunit protein bL17 from Coxiella burnetii (strain CbuG_Q212) (Coxiella burnetii (strain Q212)).